Reading from the N-terminus, the 235-residue chain is UDP-2,3-diacylglucosamine hydrolase (235 aa).

Mn(2+)-binding residues include Asp9, His11, Asp42, Asn80, and His115. 80 to 81 (NR) contacts substrate. Positions 123, 161, 165, 168, and 196 each coordinate substrate. 2 residues coordinate Mn(2+): His196 and His198.

The protein belongs to the LpxH family. It depends on Mn(2+) as a cofactor.

The protein localises to the cell inner membrane. It carries out the reaction UDP-2-N,3-O-bis[(3R)-3-hydroxytetradecanoyl]-alpha-D-glucosamine + H2O = 2-N,3-O-bis[(3R)-3-hydroxytetradecanoyl]-alpha-D-glucosaminyl 1-phosphate + UMP + 2 H(+). The protein operates within glycolipid biosynthesis; lipid IV(A) biosynthesis; lipid IV(A) from (3R)-3-hydroxytetradecanoyl-[acyl-carrier-protein] and UDP-N-acetyl-alpha-D-glucosamine: step 4/6. Its function is as follows. Hydrolyzes the pyrophosphate bond of UDP-2,3-diacylglucosamine to yield 2,3-diacylglucosamine 1-phosphate (lipid X) and UMP by catalyzing the attack of water at the alpha-P atom. Involved in the biosynthesis of lipid A, a phosphorylated glycolipid that anchors the lipopolysaccharide to the outer membrane of the cell. In Actinobacillus succinogenes (strain ATCC 55618 / DSM 22257 / CCUG 43843 / 130Z), this protein is UDP-2,3-diacylglucosamine hydrolase.